A 55-amino-acid polypeptide reads, in one-letter code: Spermatid nuclear transition protein 1 (55 aa).

Residues 1-42 (MSTSRKLKTHGMRRGKNRAPHKGVKRGGSKRKYRKSVLKSRK) are compositionally biased toward basic residues. The disordered stretch occupies residues 1-55 (MSTSRKLKTHGMRRGKNRAPHKGVKRGGSKRKYRKSVLKSRKRGDDASRNYRSHL). A phosphoserine mark is found at Ser36 and Ser40.

This sequence belongs to the nuclear transition protein 1 family. As to expression, testis-specific.

The protein localises to the nucleus. The protein resides in the chromosome. Its function is as follows. Plays a key role in the replacement of histones to protamine in the elongating spermatids of mammals. In condensing spermatids, loaded onto the nucleosomes, where it promotes the recruitment and processing of protamines, which are responsible for histone eviction. The histone H2AB1-H2BC1/TH2B dimer is required for loading of TNP1 onto chromatin. The polypeptide is Spermatid nuclear transition protein 1 (Mus musculus (Mouse)).